Consider the following 247-residue polypeptide: Adenosylcobinamide-GDP ribazoletransferase (247 aa).

The next 5 helical transmembrane spans lie at 34–54, 59–79, 113–133, 138–158, and 187–207; these read IVMFPFIGLILGGVSGLIFIL, CGIPLAALFCILALALLTGGF, GGLALIFVLLTKILVVSELAL, MLAALAAACAAGRGSAVLLMY, and LAVIVATVLLPGMQGLAAMVV.

The protein belongs to the CobS family. Mg(2+) is required as a cofactor.

It is found in the cell inner membrane. The catalysed reaction is alpha-ribazole + adenosylcob(III)inamide-GDP = adenosylcob(III)alamin + GMP + H(+). It carries out the reaction alpha-ribazole 5'-phosphate + adenosylcob(III)inamide-GDP = adenosylcob(III)alamin 5'-phosphate + GMP + H(+). Its pathway is cofactor biosynthesis; adenosylcobalamin biosynthesis; adenosylcobalamin from cob(II)yrinate a,c-diamide: step 7/7. In terms of biological role, joins adenosylcobinamide-GDP and alpha-ribazole to generate adenosylcobalamin (Ado-cobalamin). Also synthesizes adenosylcobalamin 5'-phosphate from adenosylcobinamide-GDP and alpha-ribazole 5'-phosphate. The chain is Adenosylcobinamide-GDP ribazoletransferase from Salmonella choleraesuis (strain SC-B67).